The chain runs to 356 residues: Tyrosine recombinase XerS (356 aa).

The Core-binding (CB) domain occupies 16–121 (IMPWFVLDYY…ALSSLYKYLT (106 aa)). Positions 169–354 (EFLDYVDCEY…VNDEQKNALD (186 aa)) constitute a Tyr recombinase domain. Catalysis depends on residues Arg210, Lys234, His306, Arg309, and His332. Tyr341 acts as the O-(3'-phospho-DNA)-tyrosine intermediate in catalysis.

The protein belongs to the 'phage' integrase family. XerS subfamily.

It is found in the cytoplasm. FtsK is required for recombination. In terms of biological role, site-specific tyrosine recombinase, which acts by catalyzing the cutting and rejoining of the recombining DNA molecules. Essential to convert dimers of the bacterial chromosome into monomers to permit their segregation at cell division. In Streptococcus uberis (strain ATCC BAA-854 / 0140J), this protein is Tyrosine recombinase XerS.